The chain runs to 166 residues: NADPH-dependent 7-cyano-7-deazaguanine reductase (166 aa).

C57 (thioimide intermediate) is an active-site residue. The active-site Proton donor is the D64. Residues 79–81 and 98–99 contribute to the substrate site; these read VES and HE.

It belongs to the GTP cyclohydrolase I family. QueF type 1 subfamily.

It localises to the cytoplasm. The enzyme catalyses 7-aminomethyl-7-carbaguanine + 2 NADP(+) = 7-cyano-7-deazaguanine + 2 NADPH + 3 H(+). It functions in the pathway tRNA modification; tRNA-queuosine biosynthesis. Its function is as follows. Catalyzes the NADPH-dependent reduction of 7-cyano-7-deazaguanine (preQ0) to 7-aminomethyl-7-deazaguanine (preQ1). In Alkaliphilus metalliredigens (strain QYMF), this protein is NADPH-dependent 7-cyano-7-deazaguanine reductase.